The chain runs to 175 residues: Crossover junction endodeoxyribonuclease RuvC (175 aa).

Catalysis depends on residues D16, E76, and D148. Mg(2+) is bound by residues D16, E76, and D148.

This sequence belongs to the RuvC family. As to quaternary structure, homodimer which binds Holliday junction (HJ) DNA. The HJ becomes 2-fold symmetrical on binding to RuvC with unstacked arms; it has a different conformation from HJ DNA in complex with RuvA. In the full resolvosome a probable DNA-RuvA(4)-RuvB(12)-RuvC(2) complex forms which resolves the HJ. It depends on Mg(2+) as a cofactor.

The protein localises to the cytoplasm. The enzyme catalyses Endonucleolytic cleavage at a junction such as a reciprocal single-stranded crossover between two homologous DNA duplexes (Holliday junction).. Its function is as follows. The RuvA-RuvB-RuvC complex processes Holliday junction (HJ) DNA during genetic recombination and DNA repair. Endonuclease that resolves HJ intermediates. Cleaves cruciform DNA by making single-stranded nicks across the HJ at symmetrical positions within the homologous arms, yielding a 5'-phosphate and a 3'-hydroxyl group; requires a central core of homology in the junction. The consensus cleavage sequence is 5'-(A/T)TT(C/G)-3'. Cleavage occurs on the 3'-side of the TT dinucleotide at the point of strand exchange. HJ branch migration catalyzed by RuvA-RuvB allows RuvC to scan DNA until it finds its consensus sequence, where it cleaves and resolves the cruciform DNA. The polypeptide is Crossover junction endodeoxyribonuclease RuvC (Rhodopseudomonas palustris (strain BisB18)).